We begin with the raw amino-acid sequence, 391 residues long: Polyisoprenyl-teichoic acid--peptidoglycan teichoic acid transferase TagV (391 aa).

The Cytoplasmic portion of the chain corresponds to 1–23; it reads MAERVRVRVRKKKKSKRRKILKR. A helical; Signal-anchor for type II membrane protein membrane pass occupies residues 24–44; the sequence is IMLLFALALLVVVGLGGYKLY. The Extracellular portion of the chain corresponds to 45–391; the sequence is KTINAADESY…TTNSTTDSSY (347 aa). Residues 329–391 form a disordered region; it reads DYTPDTSTGT…TTNSTTDSSY (63 aa). Low complexity predominate over residues 333 to 391; it reads DTSTGTSGTEDGTDSSSSSGSTGSTGTTTDGTTNGSSYSNDSSTSSNNSTTNSTTDSSY.

This sequence belongs to the LytR/CpsA/Psr (LCP) family.

Its subcellular location is the cell membrane. It functions in the pathway cell wall biogenesis. Functionally, may catalyze the final step in cell wall teichoic acid biosynthesis, the transfer of the anionic cell wall polymers (APs) from their lipid-linked precursor to the cell wall peptidoglycan (PG). The protein is Polyisoprenyl-teichoic acid--peptidoglycan teichoic acid transferase TagV of Bacillus subtilis (strain 168).